Reading from the N-terminus, the 223-residue chain is Deoxyribose-phosphate aldolase (223 aa).

D89 (proton donor/acceptor) is an active-site residue. K152 serves as the catalytic Schiff-base intermediate with acetaldehyde. K181 acts as the Proton donor/acceptor in catalysis.

Belongs to the DeoC/FbaB aldolase family. DeoC type 1 subfamily.

The protein localises to the cytoplasm. It catalyses the reaction 2-deoxy-D-ribose 5-phosphate = D-glyceraldehyde 3-phosphate + acetaldehyde. Its pathway is carbohydrate degradation; 2-deoxy-D-ribose 1-phosphate degradation; D-glyceraldehyde 3-phosphate and acetaldehyde from 2-deoxy-alpha-D-ribose 1-phosphate: step 2/2. Catalyzes a reversible aldol reaction between acetaldehyde and D-glyceraldehyde 3-phosphate to generate 2-deoxy-D-ribose 5-phosphate. The chain is Deoxyribose-phosphate aldolase from Bacillus cereus (strain G9842).